An 81-amino-acid chain; its full sequence is Sec-independent protein translocase protein TatA (81 aa).

Residues 1-21 traverse the membrane as a helical segment; it reads MGGLQPWHWVIVIAVFVLLFG. Basic and acidic residues predominate over residues 46–56; that stretch reads MQAESKGDEPK. The interval 46-81 is disordered; that stretch reads MQAESKGDEPKPATPIASERVDTTAPEQQSTDRHTA.

Belongs to the TatA/E family. As to quaternary structure, the Tat system comprises two distinct complexes: a TatABC complex, containing multiple copies of TatA, TatB and TatC subunits, and a separate TatA complex, containing only TatA subunits. Substrates initially bind to the TatABC complex, which probably triggers association of the separate TatA complex to form the active translocon.

The protein resides in the cell membrane. In terms of biological role, part of the twin-arginine translocation (Tat) system that transports large folded proteins containing a characteristic twin-arginine motif in their signal peptide across membranes. TatA could form the protein-conducting channel of the Tat system. In Mycolicibacterium smegmatis (strain ATCC 700084 / mc(2)155) (Mycobacterium smegmatis), this protein is Sec-independent protein translocase protein TatA.